The sequence spans 488 residues: Protein unzipped (488 aa).

Residues 1–21 (MTSNSCLISLGLLLVLIQILA) form the signal peptide. The Extracellular portion of the chain corresponds to 22–465 (PAKAAEHSVF…DVALAGFGVN (444 aa)). N-linked (GlcNAc...) asparagine glycans are attached at residues asparagine 35, asparagine 232, asparagine 317, and asparagine 374. The segment covering 380–400 (TTTTTTTTSTSTTTHATTTST) has biased composition (low complexity). Residues 380 to 453 (TTTTTTTTST…EAPENMSSDP (74 aa)) form a disordered region. The N-linked (GlcNAc...) asparagine glycan is linked to asparagine 448. Residues 466 to 486 (AAGSTFIAGSALLTLLLTIFL) traverse the membrane as a helical segment. Residues 487–488 (SL) are Cytoplasmic-facing.

It localises to the membrane. In terms of biological role, required for normal axon patterning during neurogenesis. The protein is Protein unzipped (uzip) of Drosophila melanogaster (Fruit fly).